A 213-amino-acid chain; its full sequence is Golgi SNAP receptor complex member 2 homolog memb-1 (213 aa).

Residues 1–189 (MEALYQSTNF…QVIDRRVRED (189 aa)) are Cytoplasmic-facing. A helical; Anchor for type IV membrane protein membrane pass occupies residues 190-210 (WILFVIGCIVCCIFMYAFYRF). At 211–213 (WRG) the chain is on the vesicular side.

It belongs to the GOSR2 family. In terms of assembly, part of a unique SNARE complex.

It is found in the golgi apparatus. It localises to the cis-Golgi network membrane. The protein resides in the golgi apparatus membrane. The protein localises to the endoplasmic reticulum membrane. Functionally, involved in transport of proteins from the cis/medial-Golgi to the trans-Golgi network. The protein is Golgi SNAP receptor complex member 2 homolog memb-1 of Caenorhabditis elegans.